The following is a 302-amino-acid chain: Ribosomal RNA small subunit methyltransferase H (302 aa).

S-adenosyl-L-methionine is bound by residues 36–38 (GGH), D56, F84, D99, and Q106.

Belongs to the methyltransferase superfamily. RsmH family.

It is found in the cytoplasm. The catalysed reaction is cytidine(1402) in 16S rRNA + S-adenosyl-L-methionine = N(4)-methylcytidine(1402) in 16S rRNA + S-adenosyl-L-homocysteine + H(+). Its function is as follows. Specifically methylates the N4 position of cytidine in position 1402 (C1402) of 16S rRNA. The chain is Ribosomal RNA small subunit methyltransferase H from Christiangramia forsetii (strain DSM 17595 / CGMCC 1.15422 / KT0803) (Gramella forsetii).